The sequence spans 186 residues: Large ribosomal subunit protein uL22 (186 aa).

Residues 159-186 are disordered; it reads KAAENEPAKKKLSKKKLQRQKEKMMRNE. A compositionally biased stretch (basic and acidic residues) spans 177–186; it reads RQKEKMMRNE.

This sequence belongs to the universal ribosomal protein uL22 family.

This is Large ribosomal subunit protein uL22 (RpL17) from Aedes albopictus (Asian tiger mosquito).